The chain runs to 143 residues: MFLGTHSPRLDDKGRLILPAKFRDELEGGVVMTRGQDRCIYVFTTREFEELHDRMRQAPLASKQARDYMRVFLSGANAETPDKQHRITIPQALRTYAGLDRELAVIGAGSRVEIWDAGTWDEYLTANESAFADTAEEVIPGLF.

2 consecutive SpoVT-AbrB domains span residues T5–E47 and A76–T119.

Belongs to the MraZ family. In terms of assembly, forms oligomers.

Its subcellular location is the cytoplasm. It is found in the nucleoid. The chain is Transcriptional regulator MraZ from Clavibacter michiganensis subsp. michiganensis (strain NCPPB 382).